A 210-amino-acid chain; its full sequence is MGVEDQPQTQPQTQPQQQPQMGYQPQMGYQPQAQMGYQPQAAPMGYPQQPIYQQQPQMGYQPPMGYQPQVGYQQQPPQPVYQTYCHDDHQPLLHANVVVTTTQPTVIRKSNSNEETAAVIVFIIGFFFSIVWLGGFFFIKSKSKTARTFGILSVVFFFLVLVIVVIVVSVTVTAAEKIAEENKDYYYSTSTGYYSTTGYYSTTTSYTTYY.

A disordered region spans residues 1 to 40 (MGVEDQPQTQPQTQPQQQPQMGYQPQMGYQPQAQMGYQPQ). The next 2 helical transmembrane spans lie at 119–139 (VIVF…FFFI) and 148–168 (TFGI…VIVV).

The protein localises to the membrane. This is Putative transmembrane protein DDB_G0267530 from Dictyostelium discoideum (Social amoeba).